The primary structure comprises 249 residues: MAEAVVTVDGWSALHDTRQFDWTSWKLISKEERQAAIDEFQQLISKWEAVEEEKQGSHGIYKVVGNKADFMFIFLRESFQELEQIKTEINKTKLGDFLIPGYSYVSIIEKTMHDPMKAGEDRELSAYVKEALKPTMPKWEHACFYPMARRRDPGVNWFEIEKEERTKLLYEHGMTGRKYAGKVKEIITGSIGLDEWEWGVTLFAHDPLQFKKIVYEMRFDEVTTKYAEFGDFIVGNFLEKEELSNHLSI.

The active site involves Y145. Fe-coproporphyrin III contacts are provided by residues 145 to 149 (YPMAR) and H172.

The protein belongs to the ChdC family. Type 1 subfamily. Fe-coproporphyrin III is required as a cofactor.

It carries out the reaction Fe-coproporphyrin III + 2 H2O2 + 2 H(+) = heme b + 2 CO2 + 4 H2O. It catalyses the reaction Fe-coproporphyrin III + H2O2 + H(+) = harderoheme III + CO2 + 2 H2O. The catalysed reaction is harderoheme III + H2O2 + H(+) = heme b + CO2 + 2 H2O. Its pathway is porphyrin-containing compound metabolism; protoheme biosynthesis. Its function is as follows. Involved in coproporphyrin-dependent heme b biosynthesis. Catalyzes the decarboxylation of Fe-coproporphyrin III (coproheme) to heme b (protoheme IX), the last step of the pathway. The reaction occurs in a stepwise manner with a three-propionate intermediate. This chain is Coproheme decarboxylase, found in Oceanobacillus iheyensis (strain DSM 14371 / CIP 107618 / JCM 11309 / KCTC 3954 / HTE831).